Here is a 110-residue protein sequence, read N- to C-terminus: Nucleoid-associated protein SYO3AOP1_1366 (110 aa).

Belongs to the YbaB/EbfC family. As to quaternary structure, homodimer.

It is found in the cytoplasm. It localises to the nucleoid. Functionally, binds to DNA and alters its conformation. May be involved in regulation of gene expression, nucleoid organization and DNA protection. This is Nucleoid-associated protein SYO3AOP1_1366 from Sulfurihydrogenibium sp. (strain YO3AOP1).